Here is a 291-residue protein sequence, read N- to C-terminus: MKDYLVKALAFDGEVRAYSVRTTNTVSEAQRRHDTWRTASAALGRSLTAGTMMGAMLKGDQKLTIKVEGNGPIGPILVDAHANGDVRGYVTNPHVDFEGTEQGKLRVYQAVGTEGFVTVIKDIGMREPFIGQSPIVSGELGEDFTYYFAVSEQTPSSVGVGVLVNGDDSILAAGGFILQIMPGAQEETISFIEERLQKIPPVSTLIEQGLSPEELLYAVLGEDKVKVLETMDVQFNCTCSRERIESVLISLGKTELEQVREEEEETEVHCHFCNERYKFSKEDITNLIENL.

Cystine bridges form between C237–C239 and C270–C273.

Belongs to the HSP33 family. In terms of processing, under oxidizing conditions two disulfide bonds are formed involving the reactive cysteines. Under reducing conditions zinc is bound to the reactive cysteines and the protein is inactive.

The protein resides in the cytoplasm. Redox regulated molecular chaperone. Protects both thermally unfolding and oxidatively damaged proteins from irreversible aggregation. Plays an important role in the bacterial defense system toward oxidative stress. In Bacillus anthracis (strain A0248), this protein is 33 kDa chaperonin.